The chain runs to 127 residues: Calcitonin receptor-stimulating peptide 2 (127 aa).

The first 25 residues, 1-25 (MGFWKLSPFLAIGLLVMYQAGILQA), serve as a signal peptide directing secretion. The propeptide occupies 26–81 (APFRSALENPLESATLTEDEICVLLTAVVKDYVQMKARELQQEQETEGSSLTAQKS). Residues 65-85 (LQQEQETEGSSLTAQKSSCKD) form a disordered region. Polar residues predominate over residues 72–81 (EGSSLTAQKS). Cys-83 and Cys-88 are disulfide-bonded.

The protein belongs to the calcitonin family.

It localises to the secreted. This Canis lupus familiaris (Dog) protein is Calcitonin receptor-stimulating peptide 2 (CRSP2).